The following is a 499-amino-acid chain: Neuronal acetylcholine receptor subunit alpha-3 (499 aa).

Positions 1 to 25 (MGVVLLPPPLSMLMLVLMLLPAASA) are cleaved as a signal peptide. Over 26 to 244 (SEAEHRLFQY…PLFYTINLII (219 aa)) the chain is Extracellular. 2 N-linked (GlcNAc...) asparagine glycosylation sites follow: Asn49 and Asn166. Intrachain disulfides connect Cys153–Cys167 and Cys217–Cys218. A helical transmembrane segment spans residues 245 to 260 (PCLLISFLTVLVFYLP). Over 261 to 262 (SD) the chain is Cytoplasmic. The helical transmembrane segment at 263-279 (CGEKVTLCISVLLSLTV) threads the bilayer. A Na(+)-binding site is contributed by Glu265. The Extracellular segment spans residues 280 to 301 (FLLVITETIPSTSLVIPLIGEY). Residues 302–320 (LLFTMIFVTLSIVITVFVL) traverse the membrane as a helical segment. Residues 321–468 (NVHYRTPTTH…QDDWKYVAMV (148 aa)) lie on the Cytoplasmic side of the membrane. 2 positions are modified to phosphoserine: Ser407 and Ser410. Residues 469–487 (IDRIFLWVFILVCILGTAG) form a helical membrane-spanning segment. Topologically, residues 488 to 499 (LFLQPLMARDDT) are extracellular.

It belongs to the ligand-gated ion channel (TC 1.A.9) family. Acetylcholine receptor (TC 1.A.9.1) subfamily. Alpha-3/CHRNA3 sub-subfamily. In terms of assembly, neuronal AChR is composed of two different types of subunits: alpha and beta. CHRNA3/Alpha-3 subunit can be combined to CHRNB2/beta-2 or CHRNB4/beta-4 to give rise to functional receptors. Part of a complex composed of STUB1/CHIP, VCP/p97, CHRNA3, and UBXN2A that modulates the ubiquitination and endoplasmic reticulum-associated degradation (ERAD) of CHRNA3. Within the complex UBXN2A acts as a scaffold protein required for the interaction of CHRNA3 with VCP/p97, this interaction also inhibits CHRNA3 ubiquitination by STUB1/CHIP and subsequently ERAD. Interacts with UBXN2A (via SEP domain), the interaction is required for the interaction of CHRNA3 in the STUB1:VCP:UBXN2A complex. Interacts with RIC3; which is required for proper folding and assembly. Post-translationally, ubiquitinated; by STUB1/CHIP and thereafter degraded by the 26S proteosome complex. As to expression, expressed in neurons. Expressed in umbrella cells of urothelium (at protein level).

The protein resides in the synaptic cell membrane. It is found in the cell membrane. The protein localises to the endoplasmic reticulum. It localises to the golgi apparatus. The enzyme catalyses Ca(2+)(in) = Ca(2+)(out). It catalyses the reaction K(+)(in) = K(+)(out). It carries out the reaction Na(+)(in) = Na(+)(out). Its activity is regulated as follows. Activated by a myriad of ligands such as acetylcholine, cytisine, nicotine, choline and epibatidine. The heteropentamer CHRNA3:CHRNB2 activity is blocked by alpha-conotoxins ImI, ImII, PnIA, GID and MII. The heteropentamer CHRNA3:CHRNB4 activity is blocked by the alpha-conotoxin ImI and AuIB. Component of neuronal acetylcholine receptors (nAChRs) that function as pentameric, ligand-gated cation channels with high calcium permeability among other activities. nAChRs are excitatory neurotrasnmitter receptors formed by a collection of nAChR subunits known to mediate synaptic transmission in the nervous system and the neuromuscular junction. Each nAchR subunit confers differential attributes to channel properties, including activation, deactivation and desensitization kinetics, pH sensitivity, cation permeability, and binding to allosteric modulators. CHRNA3 forms heteropentameric neuronal acetylcholine receptors with CHRNB2 and CHRNB4. CHRNA3:CHRNB4 being predominant in neurons of the autonomic ganglia, it is known as ganglionic nicotinic receptor. CHRNA3:CHRNB4 also plays an important role in the habenulo-interpeduncular tract, modulating the mesolimbic dopamine system and affecting reward circuits and addiction. Hypothalamic CHRNA3:CHRNB4 nAChR activation by nicotine leads to activation of POMC neurons and a decrease in food intake. Also expressed in the urothelium where it modulates reflex bladder activity by increasing intracellular calcium through extracellular influx and basal ATP release. This chain is Neuronal acetylcholine receptor subunit alpha-3 (Chrna3), found in Rattus norvegicus (Rat).